The primary structure comprises 200 residues: ATP-dependent Clp protease proteolytic subunit 3 (200 aa).

Residue S101 is the Nucleophile of the active site. The active site involves H126.

It belongs to the peptidase S14 family. Fourteen ClpP subunits assemble into 2 heptameric rings which stack back to back to give a disk-like structure with a central cavity, resembling the structure of eukaryotic proteasomes.

The protein resides in the cytoplasm. The catalysed reaction is Hydrolysis of proteins to small peptides in the presence of ATP and magnesium. alpha-casein is the usual test substrate. In the absence of ATP, only oligopeptides shorter than five residues are hydrolyzed (such as succinyl-Leu-Tyr-|-NHMec, and Leu-Tyr-Leu-|-Tyr-Trp, in which cleavage of the -Tyr-|-Leu- and -Tyr-|-Trp bonds also occurs).. In terms of biological role, cleaves peptides in various proteins in a process that requires ATP hydrolysis. Has a chymotrypsin-like activity. Plays a major role in the degradation of misfolded proteins. This is ATP-dependent Clp protease proteolytic subunit 3 from Synechococcus sp. (strain CC9605).